A 510-amino-acid polypeptide reads, in one-letter code: Inositol-3-phosphate synthase (510 aa).

Residues G70, G71, N72, N73, D143, I180, Q190, R193, T230, A231, N232, T233, G281, S282, D306, S309, N340, N341, D342, K355, G393, D394, D422, and S423 each coordinate NAD(+).

Belongs to the myo-inositol 1-phosphate synthase family. The cofactor is NAD(+).

It localises to the cytoplasm. The protein resides in the cytosol. Its subcellular location is the nucleus. It carries out the reaction D-glucose 6-phosphate = 1D-myo-inositol 3-phosphate. The protein operates within polyol metabolism; myo-inositol biosynthesis; myo-inositol from D-glucose 6-phosphate: step 1/2. Functionally, key enzyme in myo-inositol biosynthesis pathway that catalyzes the conversion of glucose 6-phosphate to 1-myo-inositol 1-phosphate in a NAD-dependent manner. This is Inositol-3-phosphate synthase from Zea mays (Maize).